We begin with the raw amino-acid sequence, 295 residues long: Origin of replication complex subunit 6 (295 aa).

The interval 212 to 295 (PSKRKHDDDS…MALEVSSAAN (84 aa)) is disordered. The span at 220 to 236 (DSDSSGESSGDDQDELD) shows a compositional bias: acidic residues. Positions 254 to 263 (WKSSVLSNKQ) are enriched in polar residues.

It belongs to the ORC6 family. In terms of assembly, component of the origin recognition complex (ORC) composed of at least ORC1, ORC2, ORC3, ORC4, ORC5 and ORC6. ORC is regulated in a cell-cycle and development dependent manner. It is sequentially assembled at the exit from anaphase of mitosis and disassembled as cells enter S phase.

The protein localises to the nucleus. Its function is as follows. Component of the origin recognition complex (ORC) that binds origins of replication. DNA-binding is ATP-dependent. The specific DNA sequences that define origins of replication have not been identified yet. ORC is required to assemble the pre-replication complex necessary to initiate DNA replication. This Oryza sativa subsp. japonica (Rice) protein is Origin of replication complex subunit 6.